The chain runs to 709 residues: Mucin-20 (709 aa).

A signal peptide spans 1-25 (MGCLWGLALPLFFFCWEVGVSGSSA). A compositionally biased stretch (polar residues) spans 57–69 (TQTLSAETSSRAS). Disordered regions lie at residues 57–92 (TQTL…ARET) and 170–403 (KGLS…WSPG). Residues 78–92 (AETRGAKRISPARET) are compositionally biased toward basic and acidic residues. Composition is skewed to low complexity over residues 173 to 182 (SSESSASSDS), 190 to 199 (SRASESSASS), 209 to 218 (SRASESSASS), 228 to 237 (SRASESSASS), 247 to 256 (SRASESSASS), 266 to 275 (SRASESSASS), 285 to 294 (SRASESSASS), 304 to 313 (SRASESSASS), 323 to 332 (SRASESSASS), 342 to 351 (SRASESSASS), 361 to 370 (SRASESSASS), and 380 to 389 (SRASESSASS). Repeat copies occupy residues 173–192 (SSES…PSRA), 193–211 (SESS…PSRA), 212–230 (SESS…PSRA), 231–249 (SESS…PSRA), 250–268 (SESS…PSRA), 269–287 (SESS…PSRA), 288–306 (SESS…PSRA), 307–325 (SESS…PSRA), 326–344 (SESS…PSRA), 345–363 (SESS…PSRA), and 364–382 (SESS…PSRA). The tract at residues 173–400 (SSESSASSDS…GPHPVITPSW (228 aa)) is 12 X 20 AA approximate tandem repeats of S-S-E-S-S-A-S-S-D-S-P-H-P-V-I-T-P-S-R-A. Residues 383-400 (SESSASSDGPHPVITPSW) form a 12; approximate repeat. Residue Asn423 is glycosylated (N-linked (GlcNAc...) asparagine). Disordered stretches follow at residues 434–515 (SSIP…APGA) and 583–657 (NFTP…VSAG). The interval 450 to 656 (VKASSTSDPP…RTRPTTDVSA (207 aa)) is involved in oligomerization. Over residues 474–489 (VTASAETLSTAGTTES) the composition is skewed to polar residues. Over residues 613–652 (TTTNSSRGTNSTLAKITTSAKTTMKPPTATPTTARTRPTT) the composition is skewed to low complexity. 2 N-linked (GlcNAc...) asparagine glycosylation sites follow: Asn616 and Asn622. The interval 657–709 (GENGGFLLLRLSVASPEDLTDPRVAERLMQQLHRELHAHAPHFQVSLLRVRRG) is interaction with MET.

Interacts with MET; oligomerization increases affinity for MET. In terms of tissue distribution, highly expressed in kidney, moderately in placenta, lung, prostate, liver, and digestive system. In the kidney, localized in the proximal tubules but not in the glomerulus or distal tubules. Detected in most of the male urogenital tract epithelia, with the exception of epididymis.

The protein resides in the secreted. It is found in the apical cell membrane. It localises to the basolateral cell membrane. Its subcellular location is the cell projection. The protein localises to the microvillus membrane. Functionally, may regulate MET signaling cascade. Seems to decrease hepatocyte growth factor (HGF)-induced transient MAPK activation. Blocks GRB2 recruitment to MET thus suppressing the GRB2-RAS pathway. Inhibits HGF-induced proliferation of MMP1 and MMP9 expression. The sequence is that of Mucin-20 (MUC20) from Homo sapiens (Human).